A 355-amino-acid chain; its full sequence is Protein pelota homolog (355 aa).

It belongs to the eukaryotic release factor 1 family. Pelota subfamily. In terms of assembly, monomer. A divalent metal cation serves as cofactor.

It localises to the cytoplasm. Its function is as follows. May function in recognizing stalled ribosomes, interact with stem-loop structures in stalled mRNA molecules, and effect endonucleolytic cleavage of the mRNA. May play a role in the release non-functional ribosomes and degradation of damaged mRNAs. Has endoribonuclease activity. This Haloarcula marismortui (strain ATCC 43049 / DSM 3752 / JCM 8966 / VKM B-1809) (Halobacterium marismortui) protein is Protein pelota homolog.